A 170-amino-acid polypeptide reads, in one-letter code: Shikimate kinase (170 aa).

Residue 11-16 (LSGKST) coordinates ATP. Residue serine 15 participates in Mg(2+) binding. Residues aspartate 33, arginine 57, and glycine 79 each contribute to the substrate site. An ATP-binding site is contributed by arginine 119. A substrate-binding site is contributed by arginine 137.

It belongs to the shikimate kinase family. In terms of assembly, monomer. Mg(2+) is required as a cofactor.

It is found in the cytoplasm. The catalysed reaction is shikimate + ATP = 3-phosphoshikimate + ADP + H(+). It functions in the pathway metabolic intermediate biosynthesis; chorismate biosynthesis; chorismate from D-erythrose 4-phosphate and phosphoenolpyruvate: step 5/7. In terms of biological role, catalyzes the specific phosphorylation of the 3-hydroxyl group of shikimic acid using ATP as a cosubstrate. In Clostridium botulinum (strain Kyoto / Type A2), this protein is Shikimate kinase.